The following is a 379-amino-acid chain: Succinyl-diaminopimelate desuccinylase (379 aa).

His70 is a Zn(2+) binding site. Asp72 is a catalytic residue. Asp103 contacts Zn(2+). Glu137 serves as the catalytic Proton acceptor. Zn(2+) is bound by residues Glu138, Glu166, and His352.

This sequence belongs to the peptidase M20A family. DapE subfamily. As to quaternary structure, homodimer. It depends on Zn(2+) as a cofactor. Requires Co(2+) as cofactor.

The catalysed reaction is N-succinyl-(2S,6S)-2,6-diaminopimelate + H2O = (2S,6S)-2,6-diaminopimelate + succinate. It participates in amino-acid biosynthesis; L-lysine biosynthesis via DAP pathway; LL-2,6-diaminopimelate from (S)-tetrahydrodipicolinate (succinylase route): step 3/3. Its function is as follows. Catalyzes the hydrolysis of N-succinyl-L,L-diaminopimelic acid (SDAP), forming succinate and LL-2,6-diaminopimelate (DAP), an intermediate involved in the bacterial biosynthesis of lysine and meso-diaminopimelic acid, an essential component of bacterial cell walls. The protein is Succinyl-diaminopimelate desuccinylase of Burkholderia ambifaria (strain MC40-6).